The sequence spans 159 residues: Putative viral CXC chemokine 2 (159 aa).

2 cysteine pairs are disulfide-bonded: Cys50–Cys77 and Cys52–Cys93.

This sequence belongs to the intercrine alpha (chemokine CxC) family.

This is Putative viral CXC chemokine 2 (UL147) from Human cytomegalovirus (strain Merlin) (HHV-5).